A 297-amino-acid polypeptide reads, in one-letter code: Tyrosine recombinase XerD (297 aa).

Residues 1–86 (MNDLIEDFLH…SLRSFFHYLM (86 aa)) form the Core-binding (CB) domain. In terms of domain architecture, Tyr recombinase spans 107 to 291 (GLPKVLNLDD…TKLRLKDVYK (185 aa)). Active-site residues include Arg147, Lys171, His243, Arg246, and His269. Catalysis depends on Tyr278, which acts as the O-(3'-phospho-DNA)-tyrosine intermediate.

This sequence belongs to the 'phage' integrase family. XerD subfamily. Forms a cyclic heterotetrameric complex composed of two molecules of XerC and two molecules of XerD.

It localises to the cytoplasm. Its function is as follows. Site-specific tyrosine recombinase, which acts by catalyzing the cutting and rejoining of the recombining DNA molecules. The XerC-XerD complex is essential to convert dimers of the bacterial chromosome into monomers to permit their segregation at cell division. It also contributes to the segregational stability of plasmids. This chain is Tyrosine recombinase XerD, found in Listeria monocytogenes serovar 1/2a (strain ATCC BAA-679 / EGD-e).